We begin with the raw amino-acid sequence, 239 residues long: tRNA uridine(34) hydroxylase (239 aa).

The 91-residue stretch at 124 to 214 (QGRELVMLDT…GILKYFEETD (91 aa)) folds into the Rhodanese domain. Cysteine 178 (cysteine persulfide intermediate) is an active-site residue.

Belongs to the TrhO family.

The catalysed reaction is uridine(34) in tRNA + AH2 + O2 = 5-hydroxyuridine(34) in tRNA + A + H2O. Functionally, catalyzes oxygen-dependent 5-hydroxyuridine (ho5U) modification at position 34 in tRNAs. This chain is tRNA uridine(34) hydroxylase, found in Bordetella parapertussis (strain 12822 / ATCC BAA-587 / NCTC 13253).